A 113-amino-acid polypeptide reads, in one-letter code: Large ribosomal subunit protein eL31 (113 aa).

The protein belongs to the eukaryotic ribosomal protein eL31 family.

This is Large ribosomal subunit protein eL31 (RPL31) from Candida glabrata (strain ATCC 2001 / BCRC 20586 / JCM 3761 / NBRC 0622 / NRRL Y-65 / CBS 138) (Yeast).